The primary structure comprises 115 residues: Cysteine-rich venom protein 5 (115 aa).

A signal peptide spans 1–22 (MSKVMIIMLVGMIFAIISTVSG). 3 disulfides stabilise this stretch: Cys26/Cys41, Cys33/Cys44, and Cys40/Cys51. Residues 54 to 115 (RIGPPINTQP…RKPTNRPRSH (62 aa)) are disordered. 2 stretches are compositionally biased toward basic residues: residues 68–77 (QPTRRTRGPK) and 86–115 (NRTR…PRSH).

In terms of tissue distribution, expressed by the venom gland.

It is found in the secreted. The chain is Cysteine-rich venom protein 5 from Pimpla hypochondriaca (Parasitoid wasp).